A 362-amino-acid chain; its full sequence is Dihydroorotate dehydrogenase (quinone) (362 aa).

FMN contacts are provided by residues 62 to 66 (AGYDK) and T86. K66 lines the substrate pocket. 111-115 (NRLGF) lines the substrate pocket. 2 residues coordinate FMN: N139 and N170. Position 170 (N170) interacts with substrate. S173 acts as the Nucleophile in catalysis. N175 contacts substrate. 2 residues coordinate FMN: K215 and S243. 244–245 (NT) is a substrate binding site. FMN is bound by residues G266, G295, and 316 to 317 (YS).

The protein belongs to the dihydroorotate dehydrogenase family. Type 2 subfamily. In terms of assembly, monomer. FMN is required as a cofactor.

Its subcellular location is the cell membrane. It carries out the reaction (S)-dihydroorotate + a quinone = orotate + a quinol. Its pathway is pyrimidine metabolism; UMP biosynthesis via de novo pathway; orotate from (S)-dihydroorotate (quinone route): step 1/1. Functionally, catalyzes the conversion of dihydroorotate to orotate with quinone as electron acceptor. In Rhizobium etli (strain CIAT 652), this protein is Dihydroorotate dehydrogenase (quinone).